The primary structure comprises 90 residues: Sec-independent protein translocase protein TatAo (90 aa).

The chain crosses the membrane as a helical span at residues 8–28; it reads FPGLPGGPELLIVLLIVVLLF. Residues 39–90 are disordered; sequence SSGQAMGEFRRGREEIEEELKKGAEGGDDEGENGDEAEADDADATETEAESR. The span at 46–63 shows a compositional bias: basic and acidic residues; that stretch reads EFRRGREEIEEELKKGAE. The segment covering 64-90 has biased composition (acidic residues); it reads GGDDEGENGDEAEADDADATETEAESR.

Belongs to the TatA/E family. As to quaternary structure, forms a complex with TatC. Cytoplasmic and membrane-bound TatA form high-molecular-weight complexes.

The protein localises to the cell membrane. Its subcellular location is the cytoplasm. In terms of biological role, part of the twin-arginine translocation (Tat) system that transports large folded proteins containing a characteristic twin-arginine motif in their signal peptide across membranes. TatA could form the protein-conducting channel of the Tat system. This is Sec-independent protein translocase protein TatAo from Haloferax volcanii (strain ATCC 29605 / DSM 3757 / JCM 8879 / NBRC 14742 / NCIMB 2012 / VKM B-1768 / DS2) (Halobacterium volcanii).